The primary structure comprises 105 residues: Large ribosomal subunit protein bL21 (105 aa).

The protein belongs to the bacterial ribosomal protein bL21 family. Part of the 50S ribosomal subunit. Contacts protein L20.

In terms of biological role, this protein binds to 23S rRNA in the presence of protein L20. This is Large ribosomal subunit protein bL21 from Rhizobium etli (strain ATCC 51251 / DSM 11541 / JCM 21823 / NBRC 15573 / CFN 42).